The primary structure comprises 1948 residues: Chromodomain-helicase-DNA-binding protein 5 (1948 aa).

3 disordered regions span residues 1–136 (MRGP…SGQL), 228–268 (SPQQ…GRGK), and 281–336 (SKRK…GDGY). Composition is skewed to acidic residues over residues 17-37 (EEME…EGFE) and 71-89 (NDEL…ESEG). Composition is skewed to basic residues over residues 95-114 (TKKK…KRKK) and 250-268 (GVRK…GRGK). A compositionally biased stretch (acidic residues) spans 289–299 (SEEDEPEDSDL). A compositionally biased stretch (basic residues) spans 319 to 328 (KKNKRRRKKK). 2 PHD-type zinc fingers span residues 341–388 (QDYC…CEKE) and 414–461 (MEFC…CTCP). The tract at residues 341 to 651 (QDYCEVCQQG…HRELMLGEDA (311 aa)) is histone-binding. The region spanning 495–552 (MPPPRPLEGIPEREFFVKWAGLSYWHCSWVKELQLELYHTVMYRNYQRKNDMDEPPPF) is the Chromo 1 domain. The disordered stretch occupies residues 547–569 (DEPPPFDYGSGDEDGKSEKRKNK). The segment covering 559–569 (EDGKSEKRKNK) has biased composition (basic and acidic residues). The Chromo 2 domain occupies 590-651 (MMVHRILNHS…HRELMLGEDA (62 aa)). Residues 710–894 (RFSWAQGTDT…FHLLNFLTPE (185 aa)) form the Helicase ATP-binding domain. 723–730 (DEMGLGKT) serves as a coordination point for ATP. The short motif at 845 to 848 (DEAH) is the DEAH box element. Positions 1026–1191 (LLQKMLKKLR…MTKQELDDIL (166 aa)) constitute a Helicase C-terminal domain. 4 disordered regions span residues 1206-1250 (MMSQ…VEDS), 1349-1409 (YNDA…LPPL), 1521-1566 (KYST…LPDK), and 1595-1692 (TALD…EDKN). 2 stretches are compositionally biased toward acidic residues: residues 1353–1364 (SQEDQEWQDELS) and 1374–1383 (SEDEDEDFEE). The residue at position 1388 (Gln1388) is an N5-methylglutamine. The segment covering 1547–1561 (TPVPASPAQLPPAPL) has biased composition (pro residues). Residue Ser1552 is modified to Phosphoserine. 3 stretches are compositionally biased toward basic and acidic residues: residues 1598-1625 (DRVE…EVEK), 1633-1650 (PLKE…DKLE), and 1657-1672 (NDFR…KEPT).

It belongs to the SNF2/RAD54 helicase family. As to quaternary structure, component of the nucleosome remodeling and deacetylase (NuRD) repressor complex, composed of core proteins MTA1, MTA2, MTA3, RBBP4, RBBP7, HDAC1, HDAC2, MBD2, MBD3, and peripherally associated proteins CDK2AP1, CDK2AP2, GATAD2A, GATAD2B, CHD3, CHD4 and CHD5. The exact stoichiometry of the NuRD complex is unknown, and some subunits such as MBD2 and MBD3, GATAD2A and GATAD2B, and CHD3, CHD4 and CHD5 define mutually exclusive NuRD complexes. Interacts with HDAC2. In terms of processing, methylated at Gln-1388 by N6AMT1. As to expression, expressed in brain regions enriched in neurons and not in regions rich in glial cells (at protein level).

It localises to the nucleus. The protein resides in the chromosome. The catalysed reaction is ATP + H2O = ADP + phosphate + H(+). ATP-dependent chromatin-remodeling factor that binds DNA through histones and regulates gene transcription. May specifically recognize and bind trimethylated 'Lys-27' (H3K27me3) and non-methylated 'Lys-4' of histone H3. Acts as a component of the histone deacetylase NuRD complex which participates in the remodeling of chromatin. Plays a role in the development of the nervous system by activating the expression of genes promoting neuron terminal differentiation. In parallel, it may also positively regulate the trimethylation of histone H3 at 'Lys-27' thereby specifically repressing genes that promote the differentiation into non-neuronal cell lineages. Regulates the expression of genes involved in cell proliferation and differentiation. Downstream activated genes may include CDKN2A that positively regulates the p53/TP53 pathway, which in turn, prevents cell proliferation. In spermatogenesis, it probably regulates histone hyperacetylation and the replacement of histones by transition proteins in chromatin, a crucial step in the condensation of spermatid chromatin and the production of functional spermatozoa. This chain is Chromodomain-helicase-DNA-binding protein 5 (Chd5), found in Rattus norvegicus (Rat).